The primary structure comprises 114 residues: Iron-sulfur cluster insertion protein ErpA (114 aa).

Residues Cys-42, Cys-106, and Cys-108 each contribute to the iron-sulfur cluster site.

It belongs to the HesB/IscA family. As to quaternary structure, homodimer. The cofactor is iron-sulfur cluster.

Its function is as follows. Required for insertion of 4Fe-4S clusters for at least IspG. This Shigella boydii serotype 18 (strain CDC 3083-94 / BS512) protein is Iron-sulfur cluster insertion protein ErpA.